The following is a 318-amino-acid chain: Deoxyhypusine hydroxylase (318 aa).

HEAT-like PBS-type repeat units lie at residues 70 to 96 (LKHE…VLEN) and 103 to 129 (VRHE…YFKE). Residues histidine 72, glutamate 73, histidine 105, glutamate 106, histidine 231, glutamate 232, histidine 264, and glutamate 265 each coordinate Fe cation. One copy of the HEAT-like PBS-type 3 repeat lies at 262–288 (VRHEAAEALGSIATDECLPVLQSFLND).

Belongs to the deoxyhypusine hydroxylase family. Fe(2+) is required as a cofactor.

It localises to the cytoplasm. Its subcellular location is the nucleus. It carries out the reaction [eIF5A protein]-deoxyhypusine + AH2 + O2 = [eIF5A protein]-hypusine + A + H2O. The protein operates within protein modification; eIF5A hypusination. Catalyzes the hydroxylation of the N(6)-(4-aminobutyl)-L-lysine intermediate to form hypusine, an essential post-translational modification only found in mature eIF-5A factor. This chain is Deoxyhypusine hydroxylase, found in Candida albicans (strain SC5314 / ATCC MYA-2876) (Yeast).